The chain runs to 397 residues: Pectate lyase 2 (397 aa).

A signal peptide spans 1–25; sequence MGIKQCCYILYFTLALVALLQPVRS. Residue Asn37 is glycosylated (N-linked (GlcNAc...) asparagine). Cys54 and Cys71 form a disulfide bridge. Ca(2+) contacts are provided by Asp194, Asp218, and Asp222. The active site involves Arg274.

The protein belongs to the polysaccharide lyase 1 family. Amb a subfamily. As to quaternary structure, monomer. Requires Ca(2+) as cofactor. The N-terminus is blocked. In terms of tissue distribution, pollen and flowers.

The enzyme catalyses Eliminative cleavage of (1-&gt;4)-alpha-D-galacturonan to give oligosaccharides with 4-deoxy-alpha-D-galact-4-enuronosyl groups at their non-reducing ends.. The protein operates within glycan metabolism; pectin degradation; 2-dehydro-3-deoxy-D-gluconate from pectin: step 2/5. Functionally, has pectate lyase activity. In Ambrosia artemisiifolia (Common ragweed), this protein is Pectate lyase 2.